The primary structure comprises 1052 residues: Multidrug resistance protein MdtB (1052 aa).

11 helical membrane-spanning segments follow: residues 15 to 37 (LFIL…GIIG), 345 to 362 (FELL…YLFL), 367 to 389 (ATII…MYFL), 396 to 418 (LTLM…VIEN), 438 to 460 (GEIG…PLLF), 472 to 494 (FAVT…TPMM), 535 to 557 (HPWL…YLLI), 867 to 889 (LWLI…ESFI), 909 to 931 (LMLT…IGIV), 968 to 990 (ILMT…GVGA), and 1000 to 1022 (MVGG…YLLF). Positions 1032–1052 (KNRHRDEDIDSSELLNGQEPQ) are disordered.

Belongs to the resistance-nodulation-cell division (RND) (TC 2.A.6) family. MdtB subfamily. Part of a tripartite efflux system composed of MdtA, MdtB and MdtC. MdtB forms a heteromultimer with MdtC.

It localises to the cell inner membrane. In Yersinia pseudotuberculosis serotype I (strain IP32953), this protein is Multidrug resistance protein MdtB.